Here is an 868-residue protein sequence, read N- to C-terminus: Dolichyl-phosphooligosaccharide-protein glycotransferase 3 (868 aa).

Topologically, residues 1–16 (MQNAESWFKKYWHLSV) are cytoplasmic. A helical membrane pass occupies residues 17 to 36 (LVIAALISVKLRILNPWNSV). At 37 to 101 (FTWTVRLGGN…IAGIIFSATS (65 aa)) the chain is on the extracellular side. The short motif at 45 to 47 (GND) is the DXD motif 1 element. Position 47 (aspartate 47) interacts with Mn(2+). Histidine 81 lines the a glycophospholipid pocket. The chain crosses the membrane as a helical span at residues 102–131 (GESLRAVLAFIPAIGGVLAILPVYLLTREV). Residues 132–133 (FD) are Cytoplasmic-facing. Residues 134-153 (KRAAVIAAFLIAIVPGQFLQ) form a helical membrane-spanning segment. Over 154–162 (RSILGFNDH) the chain is Extracellular. Aspartate 161 lines the Mn(2+) pocket. A DXD motif 2 motif is present at residues 161 to 163 (DHH). Position 162 (histidine 162) interacts with a glycophospholipid. Position 163 (histidine 163) interacts with Mn(2+). Residues 163 to 184 (HIWEAFWQVSALGTFLLAYNRW) traverse the membrane as a helical segment. The Cytoplasmic portion of the chain corresponds to 185–199 (KGHDLSHNLTARQMA). A helical transmembrane segment spans residues 200-212 (YPVIAGITIGLYV). The Extracellular segment spans residues 213–215 (LSW). A helical transmembrane segment spans residues 216–238 (GAGFIIAPIILAFMFFAFVLAGF). Residues 239 to 241 (VNA) are Cytoplasmic-facing. A helical membrane pass occupies residues 242–262 (DRKNLSLVAVVTFAVSALIYL). The Extracellular portion of the chain corresponds to 263-279 (PFAFNYPGFSTIFYSPF). Residues 280–303 (QLLVLLGSAVIAAAFYQIEKWNDV) form a helical membrane-spanning segment. At 304–312 (GFFERVGLG) the chain is on the cytoplasmic side. A helical membrane pass occupies residues 313–330 (RKGMPLAVIVLTALIMGL). At 331–373 (FFVISPDFARNLLSVVRVVQPKGGALTIAEVYPFFFTHNGEFT) the chain is on the extracellular side. The TIXE motif signature appears at 357–360 (TIAE). Residues 374–396 (LTNAVLHFGALFFFGMAGILYSA) form a helical membrane-spanning segment. Topologically, residues 397 to 404 (YRFLKRRS) are cytoplasmic. The chain crosses the membrane as a helical span at residues 405-423 (FPEMALLIWAIAMFIALWG). Residues 424–427 (QNRF) are Extracellular-facing. Residue arginine 426 coordinates a glycophospholipid. Residues 428 to 452 (AYYFAAVSAVYSALALSVVFDKLHL) traverse the membrane as a helical segment. At 453-468 (YRALENAIGARNKLSY) the chain is on the cytoplasmic side. Residues 469 to 494 (FRVAFALLIALAAIYPTYILADAQSS) traverse the membrane as a helical segment. Residues 495–868 (YAGGPNKQWY…QNGEIIQLDL (374 aa)) lie on the Extracellular side of the membrane. The interval 550–552 (WWD) is interacts with target acceptor peptide in protein substrate. The short motif at 550–554 (WWDYG) is the WWDYG motif element. The DKi motif signature appears at 613 to 622 (EMETGKYYAM).

It belongs to the STT3 family. Requires Mg(2+) as cofactor. Mn(2+) serves as cofactor. It depends on Zn(2+) as a cofactor.

The protein localises to the cell membrane. It catalyses the reaction an archaeal dolichyl phosphooligosaccharide + [protein]-L-asparagine = an archaeal dolichyl phosphate + a glycoprotein with the oligosaccharide chain attached by N-beta-D-glycosyl linkage to a protein L-asparagine.. Its pathway is protein modification; protein glycosylation. Its function is as follows. Oligosaccharyl transferase (OST) that catalyzes the initial transfer of a defined glycan (a glucose-linked heptasaccharide composed of 3 Glc, 2 Man, 2 Gal and a sulfate for A.fulgidus AglB-L) from the lipid carrier dolichol-monophosphate to an asparagine residue within an Asn-X-Ser/Thr consensus motif in nascent polypeptide chains, the first step in protein N-glycosylation. The polypeptide is Dolichyl-phosphooligosaccharide-protein glycotransferase 3 (aglB3) (Archaeoglobus fulgidus (strain ATCC 49558 / DSM 4304 / JCM 9628 / NBRC 100126 / VC-16)).